Consider the following 60-residue polypeptide: Large ribosomal subunit protein uL30 (60 aa).

It belongs to the universal ribosomal protein uL30 family. As to quaternary structure, part of the 50S ribosomal subunit.

This is Large ribosomal subunit protein uL30 from Salinispora arenicola (strain CNS-205).